A 302-amino-acid chain; its full sequence is Small ribosomal subunit protein uS3 (302 aa).

Positions 17–86 constitute a KH type-2 domain; the sequence is IDEFFAEELA…DPQIDVQEVE (70 aa). The segment at 222-302 is disordered; it reads EDADAEDADA…EMDDEDGGAE (81 aa).

Belongs to the universal ribosomal protein uS3 family. In terms of assembly, part of the 30S ribosomal subunit.

Functionally, binds the lower part of the 30S subunit head. This is Small ribosomal subunit protein uS3 from Halobacterium salinarum (strain ATCC 700922 / JCM 11081 / NRC-1) (Halobacterium halobium).